The sequence spans 475 residues: Protein transport protein Sec61 subunit alpha (475 aa).

10 helical membrane-spanning segments follow: residues 33-53 (LWTA…LFGI), 76-96 (LMEL…LLAG), 118-138 (LFGM…GMYG), 145-165 (AGIC…VLLL), 173-193 (YGLG…TIVW), 241-261 (NLMN…FQGF), 289-309 (IPII…QMLA), 354-374 (FLDP…CAFF), 420-440 (AAFG…IGAI), and 441-461 (GSGT…EIFV).

This sequence belongs to the SecY/SEC61-alpha family. As to quaternary structure, the SEC61 channel-forming translocon complex consists of channel-forming core components SEC61A1, SEC61B and SEC61G and different auxiliary components such as SEC62 and SEC63. The SEC61 channel associates with the multi-pass translocon (MPT) complex. In terms of tissue distribution, expressed predominantly in epidermal cells of the embryo.

The protein resides in the endoplasmic reticulum membrane. Functionally, component of SEC61 channel-forming translocon complex that mediates transport of signal peptide-containing precursor polypeptides across the endoplasmic reticulum (ER). Forms a ribosome receptor and a gated pore in the ER membrane, both functions required for cotranslational translocation of nascent polypeptides. May cooperate with auxiliary protein SEC62, SEC63 and HSPA5/BiP to enable post-translational transport of small presecretory proteins. The SEC61 channel is also involved in ER membrane insertion of transmembrane proteins: it mediates membrane insertion of the first few transmembrane segments of proteins, while insertion of subsequent transmembrane regions of multi-pass membrane proteins is mediated by the multi-pass translocon (MPT) complex. The protein is Protein transport protein Sec61 subunit alpha of Halocynthia roretzi (Sea squirt).